The following is a 225-amino-acid chain: 7-cyano-7-deazaguanine synthase (225 aa).

10 to 20 is an ATP binding site; the sequence is LSGGIDSATAA. 4 residues coordinate Zn(2+): C191, C199, C202, and C205.

The protein belongs to the QueC family. Zn(2+) is required as a cofactor.

The enzyme catalyses 7-carboxy-7-deazaguanine + NH4(+) + ATP = 7-cyano-7-deazaguanine + ADP + phosphate + H2O + H(+). Its pathway is purine metabolism; 7-cyano-7-deazaguanine biosynthesis. In terms of biological role, catalyzes the ATP-dependent conversion of 7-carboxy-7-deazaguanine (CDG) to 7-cyano-7-deazaguanine (preQ(0)). This is 7-cyano-7-deazaguanine synthase from Prochlorococcus marinus (strain NATL1A).